A 76-amino-acid polypeptide reads, in one-letter code: Conotoxin ArMKLT2-032 (76 aa).

The signal sequence occupies residues Met1–Gly22. Residues Glu23–Arg46 constitute a propeptide that is removed on maturation. Residue Gln47 is modified to Pyrrolidone carboxylic acid. Cystine bridges form between Cys48–Cys62, Cys55–Cys66, and Cys61–Cys73.

It belongs to the conotoxin O1 superfamily. As to expression, expressed by the venom duct.

It localises to the secreted. The protein is Conotoxin ArMKLT2-032 of Conus arenatus (Sand-dusted cone).